Reading from the N-terminus, the 501-residue chain is DELTA-alicitoxin-Pse2a (501 aa).

The N-terminal stretch at 1–22 is a signal peptide; it reads MSPYFKLSSALIFLAITMEALC. Residues 23 to 35 constitute a propeptide that is removed on maturation; it reads SPIENTSTSNKDN. An MACPF domain is found at 23 to 359; sequence SPIENTSTSN…GFLHFGCSYL (337 aa). A coiled-coil region spans residues 135–159; the sequence is AAVTNNIASSEEEVQGLSLNLKAYS. In terms of domain architecture, EGF-like spans 388–422; the sequence is VCKVGPEGCQHHEDCHYRAAFWCECGGPYDLARTC. Cystine bridges form between Cys389/Cys402, Cys396/Cys410, and Cys412/Cys422.

The protein resides in the secreted. The protein localises to the nematocyst. Its function is as follows. Causes lethal toxicity to the shrimp Palaemon paucidence, and hemolytic activity toward sheep red blood cells. This Phyllodiscus semoni (Night anemone) protein is DELTA-alicitoxin-Pse2a.